We begin with the raw amino-acid sequence, 136 residues long: Large-conductance mechanosensitive channel (136 aa).

A run of 2 helical transmembrane segments spans residues 10–30 and 76–96; these read FAMR…AAFG and GVFI…FMAI.

This sequence belongs to the MscL family. Homopentamer.

The protein resides in the cell inner membrane. In terms of biological role, channel that opens in response to stretch forces in the membrane lipid bilayer. May participate in the regulation of osmotic pressure changes within the cell. In Escherichia coli O139:H28 (strain E24377A / ETEC), this protein is Large-conductance mechanosensitive channel.